The sequence spans 365 residues: 2-aminoethylphosphonate--pyruvate transaminase (365 aa).

N6-(pyridoxal phosphate)lysine is present on lysine 194.

It belongs to the class-V pyridoxal-phosphate-dependent aminotransferase family. PhnW subfamily. Homodimer. It depends on pyridoxal 5'-phosphate as a cofactor.

It catalyses the reaction (2-aminoethyl)phosphonate + pyruvate = phosphonoacetaldehyde + L-alanine. Its function is as follows. Involved in phosphonate degradation. The polypeptide is 2-aminoethylphosphonate--pyruvate transaminase (Bacillus mycoides (strain KBAB4) (Bacillus weihenstephanensis)).